We begin with the raw amino-acid sequence, 284 residues long: MLSKQIPLGIYEKALPAGECWLERLRLAKTLGFDFVEMSVDETNERLSRLDWSREQRLALVNAIVETGVRVPSMCLSAHRRFPLGSEDDAVRAQGLEIMRKAIQFAQDVGIRVIQLAGYDVYYQEANNETRRRFRDGLKESVEMASRAQVTLAMEIMDYPLMNSISKALGYAHYLNNPWFQLYPDIGNLSAWDNDVQMELQAGIGHIVAVHVKDTKPGVFKNVPFGEGVVDFERCFETLKQSGYCGPYLIEMWSETAEDPAAEVVKACDWVKARMAKAGMVEAA.

It belongs to the L-ribulose-5-phosphate 3-epimerase family.

The catalysed reaction is L-ribulose 5-phosphate = L-xylulose 5-phosphate. It functions in the pathway cofactor degradation; L-ascorbate degradation; D-xylulose 5-phosphate from L-ascorbate: step 3/4. Catalyzes the isomerization of L-xylulose-5-phosphate to L-ribulose-5-phosphate. Is involved in the anaerobic L-ascorbate utilization. This chain is L-ribulose-5-phosphate 3-epimerase UlaE, found in Shigella flexneri.